Reading from the N-terminus, the 60-residue chain is Large ribosomal subunit protein bL32 (60 aa).

The segment at 1 to 60 (MAVQQNKKSPSKRGMHRSHDFLVNPATAIEPNTGETHLRHHISPNGFYRGRKVLKTKADE) is disordered. Residues 49–60 (RGRKVLKTKADE) show a composition bias toward basic residues.

Belongs to the bacterial ribosomal protein bL32 family.

This Bordetella bronchiseptica (strain ATCC BAA-588 / NCTC 13252 / RB50) (Alcaligenes bronchisepticus) protein is Large ribosomal subunit protein bL32.